A 952-amino-acid polypeptide reads, in one-letter code: Leucine--tRNA ligase (952 aa).

Residues 48–58 (PYLNGVLHAGH) carry the 'HIGH' region motif. The short motif at 644 to 648 (KLSKS) is the 'KMSKS' region element. Lys647 is an ATP binding site.

It belongs to the class-I aminoacyl-tRNA synthetase family.

The protein resides in the cytoplasm. It carries out the reaction tRNA(Leu) + L-leucine + ATP = L-leucyl-tRNA(Leu) + AMP + diphosphate. In Methanococcus vannielii (strain ATCC 35089 / DSM 1224 / JCM 13029 / OCM 148 / SB), this protein is Leucine--tRNA ligase.